We begin with the raw amino-acid sequence, 247 residues long: Chromosome partition protein MukE (247 aa).

A disordered region spans residues 213 to 247; that stretch reads AQSLQEEKNGLKDNMDQSAVENEQYFENEENEGIA. Over residues 217 to 227 the composition is skewed to basic and acidic residues; that stretch reads QEEKNGLKDNM. A compositionally biased stretch (acidic residues) spans 236–247; sequence QYFENEENEGIA.

Belongs to the MukE family. Interacts, and probably forms a ternary complex, with MukF and MukB. The complex formation is stimulated by calcium or magnesium.

It is found in the cytoplasm. The protein resides in the nucleoid. Functionally, involved in chromosome condensation, segregation and cell cycle progression. May participate in facilitating chromosome segregation by condensation DNA from both sides of a centrally located replisome during cell division. Probably acts via its interaction with MukB and MukF. The chain is Chromosome partition protein MukE from Histophilus somni (strain 2336) (Haemophilus somnus).